Consider the following 159-residue polypeptide: Transmembrane protein 42 (159 aa).

The next 4 membrane-spanning stretches (helical) occupy residues 37 to 57 (FWGVFNCLCAGAFGALAAASA), 59 to 79 (LAFGSEVSMGLCVLGIIVMAS), 100 to 120 (IASVTVTFSNILSSAFLGYVL), and 124 to 144 (CQEVLWWGGVFLILCGLTLIH).

It is found in the membrane. The chain is Transmembrane protein 42 (TMEM42) from Homo sapiens (Human).